A 246-amino-acid polypeptide reads, in one-letter code: MAGHSKWKNIQRRKNAQDAKRGKLFMKLAKEIYVAAKTGGGDPASNPALRLVIEKAKAANMPNENIERAIKKATGTQEHTNYEEVRYEGYGPGGVAVMVVCLTDNKNRTASNVRVAFSKNGGNLGETGCVSYLFDRKGLLVIAREGLDIDEDDMLLQAIEAGAEEMETTEDSFEIYTTPEAFEEVKEQLEKNGFTFASAEITMIPQTYTTLAGDDLKKMLKLIDTLEDDDDVQEVYHNLDESVLEE.

This sequence belongs to the TACO1 family.

It localises to the cytoplasm. The polypeptide is Probable transcriptional regulatory protein GWCH70_2524 (Geobacillus sp. (strain WCH70)).